We begin with the raw amino-acid sequence, 533 residues long: Acid-sensing ion channel 3 (533 aa).

Topologically, residues 1–19 (MKPRSGLEEAQRRQASDIR) are cytoplasmic. The helical transmembrane segment at 20-40 (VFASSCTMHGLGHIFGPGGLT) threads the bilayer. Residue Thr-40 is modified to Phosphothreonine; by PKC. Residues 41–435 (LRRGLWATAV…EQKAAYEVSE (395 aa)) are Extracellular-facing. 7 disulfide bridges follow: Cys-93–Cys-187, Cys-165–Cys-172, Cys-283–Cys-372, Cys-317–Cys-368, Cys-321–Cys-366, Cys-330–Cys-352, and Cys-332–Cys-344. Residue Asn-176 is glycosylated (N-linked (GlcNAc...) asparagine). A disordered region spans residues 286–310 (ASLDPDDFDPEPSDPLGSPRPRPSP). N-linked (GlcNAc...) asparagine glycosylation occurs at Asn-400. Residues 436–456 (LLGDIGGQMGLFIGASLLTIL) form a helical membrane-spanning segment. The short motif at 449-451 (GAS) is the GAS motif; ion selectivity filter element. Over 457–533 (EILDYLCEVF…HRTCYLVTRL (77 aa)) the chain is Cytoplasmic. Phosphoserine; by PKC is present on Ser-523. The short motif at 530–533 (VTRL) is the PDZ-binding element.

The protein belongs to the amiloride-sensitive sodium channel (TC 1.A.6) family. ASIC3 subfamily. In terms of assembly, can form homotrimeric channels. Heterotrimer; forms functional heterotrimers producing channel with different properties. Forms heterotrimers with ASIC2; gives rise to a biphasic current with a sustained current which discriminates poorly between Na(+) and K(+). Interacts with STOM; inhibits ASIC3 acid-evoked current. Interacts with LIN7B (via PDZ domain); increases ASIC3 expression at the plasma membrane. Interacts with MAGI1 (via PDZ domain); probably regulates ASIC3. Interacts with GOPC (via PDZ domain); probably regulates ASIC3. Interacts with DLG4 (via PDZ domain); reduces ASIC3 expression at the plasma membrane. Post-translationally, could be phosphorylated by PKC, promoting activation of ASIC2/ASIC3 heterotrimers. In terms of tissue distribution, expressed in sciatic nerve and dorsal root ganglion (at protein level). Expressed in sensory neurons of dorsal root ganglion. Expressed in Golgi interneurons in the granular layer. Also found in superior cervical ganglia, spinal cord and brain stem.

It is found in the cell membrane. The protein localises to the cytoplasm. The enzyme catalyses Na(+)(in) = Na(+)(out). The catalysed reaction is K(+)(in) = K(+)(out). It carries out the reaction Ca(2+)(in) = Ca(2+)(out). Its activity is regulated as follows. Inhibited by the diuretic drug amiloride. Inhibited by gadolinium ions. Inhibited by extracellular Ca(2+). Activated by lactate. Salicylic acid, diclofenac and aspirin inhibit the sustained current component. Activated by the vertebrate neuropeptides NPFF and NPSF, and the related FMRFamide. Specifically and reversibly inhibited by the a sea anemone toxin APETx2. ASIC3-containing channels are potentiated by the cono-RFamide CNF-Tx1.1, and probably CNF-Tx1.2 and CNF-Tx1.3 (AC P0DL71). Functionally, forms pH-gated heterotrimeric sodium channels that act as postsynaptic excitatory receptors in the nervous system. Upon extracellular acidification, these channels generate a biphasic current with a fast inactivating and a slow sustained phase. ASIC3 is more sensitive to protons and gates between closed, open, and desensitized states faster than other ASICs. Displays high selectivity for sodium ions but can also permit the permeation of other cations. As a neuronal acid sensor, probably contributes to mechanoreception, acid nociception, and heat nociception. By forming heterotrimeric channels with ASIC2, generates a biphasic current with a fast inactivating and a slow sustained phase, which in sensory neurons is proposed to mediate the pain induced by acidosis that occurs in ischemic, damaged or inflamed tissues. The chain is Acid-sensing ion channel 3 from Rattus norvegicus (Rat).